An 89-amino-acid chain; its full sequence is Small ribosomal subunit protein bS20 (89 aa).

Residues 1 to 26 (MANSPQAKKRARQNEKNRKHNASLRS) are disordered. Positions 7–22 (AKKRARQNEKNRKHNA) are enriched in basic residues.

The protein belongs to the bacterial ribosomal protein bS20 family.

Binds directly to 16S ribosomal RNA. The polypeptide is Small ribosomal subunit protein bS20 (Marinobacter nauticus (strain ATCC 700491 / DSM 11845 / VT8) (Marinobacter aquaeolei)).